The primary structure comprises 352 residues: Alanine racemase (352 aa).

Lys-33 (proton acceptor; specific for D-alanine) is an active-site residue. Position 33 is an N6-(pyridoxal phosphate)lysine (Lys-33). Residue Arg-129 participates in substrate binding. The Proton acceptor; specific for L-alanine role is filled by Tyr-250. A substrate-binding site is contributed by Met-298.

This sequence belongs to the alanine racemase family. Pyridoxal 5'-phosphate is required as a cofactor.

The catalysed reaction is L-alanine = D-alanine. It functions in the pathway amino-acid biosynthesis; D-alanine biosynthesis; D-alanine from L-alanine: step 1/1. Functionally, catalyzes the interconversion of L-alanine and D-alanine. May also act on other amino acids. This Neisseria meningitidis serogroup B (strain ATCC BAA-335 / MC58) protein is Alanine racemase (alr).